Reading from the N-terminus, the 218-residue chain is Thiamine-phosphate synthase (218 aa).

4-amino-2-methyl-5-(diphosphooxymethyl)pyrimidine is bound by residues 45–49 (QYREK) and N77. Mg(2+) contacts are provided by D78 and D97. S116 is a 4-amino-2-methyl-5-(diphosphooxymethyl)pyrimidine binding site. Residue 142–144 (TKT) coordinates 2-[(2R,5Z)-2-carboxy-4-methylthiazol-5(2H)-ylidene]ethyl phosphate. K145 contributes to the 4-amino-2-methyl-5-(diphosphooxymethyl)pyrimidine binding site. 2-[(2R,5Z)-2-carboxy-4-methylthiazol-5(2H)-ylidene]ethyl phosphate contacts are provided by residues G173 and 193 to 194 (VT).

This sequence belongs to the thiamine-phosphate synthase family. Requires Mg(2+) as cofactor.

The enzyme catalyses 2-[(2R,5Z)-2-carboxy-4-methylthiazol-5(2H)-ylidene]ethyl phosphate + 4-amino-2-methyl-5-(diphosphooxymethyl)pyrimidine + 2 H(+) = thiamine phosphate + CO2 + diphosphate. It carries out the reaction 2-(2-carboxy-4-methylthiazol-5-yl)ethyl phosphate + 4-amino-2-methyl-5-(diphosphooxymethyl)pyrimidine + 2 H(+) = thiamine phosphate + CO2 + diphosphate. The catalysed reaction is 4-methyl-5-(2-phosphooxyethyl)-thiazole + 4-amino-2-methyl-5-(diphosphooxymethyl)pyrimidine + H(+) = thiamine phosphate + diphosphate. The protein operates within cofactor biosynthesis; thiamine diphosphate biosynthesis; thiamine phosphate from 4-amino-2-methyl-5-diphosphomethylpyrimidine and 4-methyl-5-(2-phosphoethyl)-thiazole: step 1/1. In terms of biological role, condenses 4-methyl-5-(beta-hydroxyethyl)thiazole monophosphate (THZ-P) and 2-methyl-4-amino-5-hydroxymethyl pyrimidine pyrophosphate (HMP-PP) to form thiamine monophosphate (TMP). In Pelotomaculum thermopropionicum (strain DSM 13744 / JCM 10971 / SI), this protein is Thiamine-phosphate synthase.